A 366-amino-acid polypeptide reads, in one-letter code: Terpene cyclase atmA (366 aa).

8 helical membrane-spanning segments follow: residues 9-29 (FLLL…NNGF), 84-104 (LTGL…VVHI), 113-133 (GMVI…GIVI), 162-182 (GLVV…SLPA), 195-215 (IAAW…HHLF), 233-253 (VYHF…SAFV), 291-311 (AGLF…TMVW), and 333-353 (ILRL…VRLI).

The protein belongs to the membrane-bound ascI terpene cyclase family.

The protein resides in the membrane. Its function is as follows. Aflatrem synthesis protein A; part of the ATM2 gene cluster that mediates the biosynthesis of aflatrem, a tremorgenic mycotoxin with acute neurotoxic effects. Synthesis of geranylgeranyl diphosphate (GGPP) by AtmG (a GGPP synthase) precedes condensation of GGPP with indole 3-glycerol phosphate, followed by epoxidation and cyclization by AtmM (a FAD-dependent monooxygenase) and AtmC (a prenyltransferase) to produce paspaline. AtmB is also essential for paspaline production, but its exact role has not been identified yet. AtmP, a cytochrome P450 monooxygenase, subsequently converts paspaline to 13-desoxypaxilline via PC-M6 by removal of the C-30 methyl group and oxidation at C-10. AtmQ, a cytochrome P450 monooxygenase, then catalyzes the oxidation of 13-desoxypaxilline, first at C-7 to produce paspalicine and then at C-13 to form paspalinine. Finally, AtmD prenylates paspalinine to form aflatrem. The role of atmA in the aflatrem biosynthesis is still unknown. This chain is Terpene cyclase atmA, found in Aspergillus flavus.